Reading from the N-terminus, the 133-residue chain is Cytochrome c-type biogenesis protein CcmE (133 aa).

At 1 to 7 (MKKKHKR) the chain is on the cytoplasmic side. The helical; Signal-anchor for type II membrane protein transmembrane segment at 8 to 28 (LLITSGIFCFLSCIVFFILTT) threads the bilayer. Residues 29-133 (LKENISFFYT…YMPKVLKQIP (105 aa)) are Periplasmic-facing. Heme contacts are provided by histidine 120 and tyrosine 124.

It belongs to the CcmE/CycJ family.

The protein localises to the cell inner membrane. Its function is as follows. Heme chaperone required for the biogenesis of c-type cytochromes. Transiently binds heme delivered by CcmC and transfers the heme to apo-cytochromes in a process facilitated by CcmF and CcmH. The protein is Cytochrome c-type biogenesis protein CcmE of Wolbachia sp. subsp. Drosophila simulans (strain wRi).